A 391-amino-acid chain; its full sequence is Stearoyl-[acyl-carrier-protein] 9-desaturase 6, chloroplastic (391 aa).

The N-terminal 38 residues, 1–38 (MLAHKSLLSFTTQWATLMPSPSTFLASRPRGPAKISAV), are a transit peptide targeting the chloroplast. Fe cation contacts are provided by Glu130, Glu168, His171, Glu221, Glu254, and His257.

Belongs to the fatty acid desaturase type 2 family. Homodimer. Requires Fe(2+) as cofactor.

The protein localises to the plastid. It localises to the chloroplast. It catalyses the reaction octadecanoyl-[ACP] + 2 reduced [2Fe-2S]-[ferredoxin] + O2 + 2 H(+) = (9Z)-octadecenoyl-[ACP] + 2 oxidized [2Fe-2S]-[ferredoxin] + 2 H2O. It functions in the pathway lipid metabolism; fatty acid metabolism. In terms of biological role, converts stearoyl-ACP to oleoyl-ACP by introduction of a cis double bond between carbons 9 and 10 of the acyl chain. In Arabidopsis thaliana (Mouse-ear cress), this protein is Stearoyl-[acyl-carrier-protein] 9-desaturase 6, chloroplastic (S-ACP-DES6).